A 468-amino-acid chain; its full sequence is bZIP transcription factor 14 (468 aa).

Disordered regions lie at residues 55 to 149 and 234 to 272; these read SRRK…EGRA and SPQS…LGKD. Composition is skewed to low complexity over residues 64-82 and 95-106; these read SFVS…SSGS and VTAASTESVSSS. Residues 112 to 128 are compositionally biased toward basic and acidic residues; sequence KKADTDDRVQRSRERNR. The bZIP 1 domain maps to 117–165; the sequence is DDRVQRSRERNRIHARKTRQRKKEQMQSLEGRATDLKHEQIRLKQIINE. The interval 119–139 is basic motif 1; sequence RVQRSRERNRIHARKTRQRKK. Over residues 129–138 the composition is skewed to basic residues; that stretch reads IHARKTRQRK. The segment at 145-159 is leucine-zipper 1; the sequence is LEGRATDLKHEQIRL. Residues 247–256 are compositionally biased toward polar residues; it reads ASTSDVSGDE. A bZIP 2 domain is found at 279–333; the sequence is EELDQIRRERNRMHAKRTRDRKRIFTEEMAEMCRILEEENHLLRVHLGGLDSDFK. Positions 285–312 are basic motif 2; that stretch reads RRERNRMHAKRTRDRKRIFTEEMAEMCR. A leucine-zipper 2 region spans residues 313–320; the sequence is ILEEENHL. The tract at residues 400-468 is disordered; sequence ERQQREAERK…TTSLAAPVGW (69 aa). Over residues 401 to 410 the composition is skewed to basic and acidic residues; that stretch reads RQQREAERKV. Residues 417-426 are compositionally biased toward low complexity; it reads SAASDTSTSD.

Belongs to the bZIP family.

Its subcellular location is the nucleus. In terms of biological role, transcriptional activator which binds to the C-box-like motif 5'-TGACGT-3' and A-box-like motif 5'-GTACGTA-3' of target promoters to positively regulate the expression of genes involved in the tricarboxylic acid (TCA) cycle in response to nitrogen starvation. May also regulate the TCA cycle during day-to-night transitions. The sequence is that of bZIP transcription factor 14 from Phaeodactylum tricornutum (strain CCAP 1055/1).